Consider the following 84-residue polypeptide: DNA-directed RNA polymerase subunit Rpo5 (84 aa).

This sequence belongs to the archaeal Rpo5/eukaryotic RPB5 RNA polymerase subunit family. As to quaternary structure, part of the 13-subunit RNA polymerase complex.

The protein resides in the cytoplasm. The catalysed reaction is RNA(n) + a ribonucleoside 5'-triphosphate = RNA(n+1) + diphosphate. Its function is as follows. DNA-dependent RNA polymerase (RNAP) catalyzes the transcription of DNA into RNA using the four ribonucleoside triphosphates as substrates. The polypeptide is DNA-directed RNA polymerase subunit Rpo5 (Saccharolobus solfataricus (strain ATCC 35092 / DSM 1617 / JCM 11322 / P2) (Sulfolobus solfataricus)).